We begin with the raw amino-acid sequence, 247 residues long: Ribonuclease 3 (247 aa).

One can recognise an RNase III domain in the interval leucine 5–glycine 147. Glutamate 40 lines the Mg(2+) pocket. Aspartate 44 is a catalytic residue. Residues glutamine 104–glycine 124 are disordered. 2 residues coordinate Mg(2+): aspartate 133 and glutamate 136. Residue glutamate 136 is part of the active site. A DRBM domain is found at aspartate 174–alanine 244.

Belongs to the ribonuclease III family. As to quaternary structure, homodimer. The cofactor is Mg(2+).

It is found in the cytoplasm. The enzyme catalyses Endonucleolytic cleavage to 5'-phosphomonoester.. In terms of biological role, digests double-stranded RNA. Involved in the processing of primary rRNA transcript to yield the immediate precursors to the large and small rRNAs (23S and 16S). Processes some mRNAs, and tRNAs when they are encoded in the rRNA operon. Processes pre-crRNA and tracrRNA of type II CRISPR loci if present in the organism. The sequence is that of Ribonuclease 3 from Verminephrobacter eiseniae (strain EF01-2).